The chain runs to 138 residues: Probable glycine cleavage system H protein 1 (138 aa).

One can recognise a Lipoyl-binding domain in the interval 30 to 112 (IATVGITDYA…YGRGWIFKLK (83 aa)). K71 carries the N6-lipoyllysine modification.

This sequence belongs to the GcvH family. The glycine cleavage system is composed of four proteins: P, T, L and H. The cofactor is (R)-lipoate.

The glycine cleavage system catalyzes the degradation of glycine. The H protein shuttles the methylamine group of glycine from the P protein to the T protein. In Sulfolobus acidocaldarius (strain ATCC 33909 / DSM 639 / JCM 8929 / NBRC 15157 / NCIMB 11770), this protein is Probable glycine cleavage system H protein 1.